A 195-amino-acid polypeptide reads, in one-letter code: Protein aq_1444 (195 aa).

Residues 1–191 (MDIRELVHLG…EKEPFGEVER (191 aa)) enclose the AMMECR1 domain.

This chain is Protein aq_1444, found in Aquifex aeolicus (strain VF5).